The sequence spans 190 residues: Putative 3-methyladenine DNA glycosylase (190 aa).

This sequence belongs to the DNA glycosylase MPG family.

The sequence is that of Putative 3-methyladenine DNA glycosylase from Corynebacterium efficiens (strain DSM 44549 / YS-314 / AJ 12310 / JCM 11189 / NBRC 100395).